The chain runs to 369 residues: Actin-related protein 2/3 complex subunit 1B-A (369 aa).

7 WD repeats span residues 6-45 (FLLEPITCHAWNKDATQIAFCPNSHDVHIYKKDGDKWSKI), 50-89 (EHNGHVTGIDWAPESNRIVTCGTDRNAYVWTLKNNVWKPT), 94-135 (RINR…WVCK), 140-179 (PIRSTVLSLDWHPNNVLLAAGSSDFKSRIFSAYIKEVEER), 200-239 (SSCGWVHSVCFSHSGDRMAWVSHDSTICISDATKKMRVTS), 242-282 (TDTL…LSFG), and 321-364 (LHKN…SAMK).

It belongs to the WD repeat ARPC1 family. Component of the Arp2/3 complex composed of actr2/arp2, actr3/arp3, arpc1 (arpc1a or arpc1b), arpc2, arpc3, arpc4 and arpc5.

The protein resides in the cytoplasm. Its subcellular location is the cytoskeleton. It localises to the nucleus. Component of the Arp2/3 complex, a multiprotein complex that mediates actin polymerization upon stimulation by nucleation-promoting factor (NPF). The Arp2/3 complex mediates the formation of branched actin networks in the cytoplasm, providing the force for cell motility. In addition to its role in the cytoplasmic cytoskeleton, the Arp2/3 complex also promotes actin polymerization in the nucleus, thereby regulating gene transcription and repair of damaged DNA. The Arp2/3 complex promotes homologous recombination (HR) repair in response to DNA damage by promoting nuclear actin polymerization, leading to drive motility of double-strand breaks (DSBs). In Xenopus laevis (African clawed frog), this protein is Actin-related protein 2/3 complex subunit 1B-A (arpc1b-a).